Reading from the N-terminus, the 577-residue chain is Arginine--tRNA ligase (577 aa).

The 'HIGH' region signature appears at 122 to 132 (PNVAKEMHVGH).

Belongs to the class-I aminoacyl-tRNA synthetase family. As to quaternary structure, monomer.

The protein resides in the cytoplasm. It carries out the reaction tRNA(Arg) + L-arginine + ATP = L-arginyl-tRNA(Arg) + AMP + diphosphate. In Escherichia coli O127:H6 (strain E2348/69 / EPEC), this protein is Arginine--tRNA ligase.